The chain runs to 470 residues: uncharacterized protein (470 aa).

A disordered region spans residues 439-470 (SIKSSKSKKQLKSSKSKKPIKHTKTKNIYVET). Positions 443–463 (SKSKKQLKSSKSKKPIKHTKT) are enriched in basic residues.

This is an uncharacterized protein from Acanthamoeba polyphaga mimivirus (APMV).